We begin with the raw amino-acid sequence, 422 residues long: tRNA hydroxylation protein P (422 aa).

Residues 1–58 (MNQVELLSPAGNLKKLKIALNYGADAVYGGVSHFSLRNRAGKEFTLETFKEGIDYAHA) form the signal peptide.

It belongs to the peptidase U32 family.

In terms of biological role, involved in prephenate-dependent formation of 5-hydroxyuridine (ho5U) modification at position 34 in tRNAs, the first step in 5-carboxymethoxyuridine (cmo5U) biosynthesis. The polypeptide is tRNA hydroxylation protein P (Helicobacter pylori (strain ATCC 700392 / 26695) (Campylobacter pylori)).